Here is a 147-residue protein sequence, read N- to C-terminus: MRTYTPKPGDINRQWHVIDATDVVLGRLASQTAILLRGKHKATFAPHMDMGDFVIIINAEKVALTGAKLEQKRAYRHSGYPGGLTSVNYAELLESNPVRAVEKAIKGMLPKNSLAAQQLGKLKVYRGAEHPHAAQQPKTFEISQVAQ.

The protein belongs to the universal ribosomal protein uL13 family. Part of the 50S ribosomal subunit.

In terms of biological role, this protein is one of the early assembly proteins of the 50S ribosomal subunit, although it is not seen to bind rRNA by itself. It is important during the early stages of 50S assembly. The sequence is that of Large ribosomal subunit protein uL13 from Arthrobacter sp. (strain FB24).